The chain runs to 507 residues: MRPPRCLFPAAEILLKAPPSRRCMSSAAAFQPPKIVAAIPWKGSSFFLSNRLFDRSTCLDFVVLRRANGIRSTSASASTTHDSTLSSSPTANHSTSAHKDHKIAPHRKRQAQRREKAAAEAAAAAARGEKPLPPDASSLLAAHAASQTSPLRRHLSACLSLAKPRLTMLVVLTAMATYALYPVPEMLSPSTTETPSLSPLTLLFLTIGTTFCSASANALNMLYEPSTDAKMTRTRNRPLVRNLISKRAAVLFAILSGFVGTGALYFGVNPTVSGLGFANIVIYAGMYTPLKAVTAFNTWIGAVVGGIPPLMGWAAAAGETATKDGSWRELLFASDGSSIGGWVMAGLLFAWQFPHFMALSWPIREEYKKAGLRMLAWTNPARNGRVALRYSFVFIPLCLSLCAAGVTEWSFAVTSFPINAWLIRESVRFWRYEGNKGSARGLFWASVWHLPGVMILALLHKKGMWTRVWRSVFGEDEGEWEEEELDEMMSVAVANTNSHMQNQKTVR.

Over residues 72 to 90 (STSASASTTHDSTLSSSPT) the composition is skewed to low complexity. Positions 72–136 (STSASASTTH…RGEKPLPPDA (65 aa)) are disordered. Over residues 99 to 111 (KDHKIAPHRKRQA) the composition is skewed to basic residues. 8 helical membrane-spanning segments follow: residues 166–186 (LTMLVVLTAMATYALYPVPEM), 199–219 (PLTLLFLTIGTTFCSASANAL), 248–268 (AAVLFAILSGFVGTGALYFGV), 270–290 (PTVSGLGFANIVIYAGMYTPL), 298–318 (TWIGAVVGGIPPLMGWAAAAG), 339–359 (IGGWVMAGLLFAWQFPHFMAL), 392–412 (FVFIPLCLSLCAAGVTEWSFA), and 441–461 (GLFWASVWHLPGVMILALLHK).

Belongs to the UbiA prenyltransferase family.

It localises to the mitochondrion membrane. The enzyme catalyses heme b + (2E,6E)-farnesyl diphosphate + H2O = Fe(II)-heme o + diphosphate. Functionally, converts protoheme IX and farnesyl diphosphate to heme O. This chain is Protoheme IX farnesyltransferase, mitochondrial (COX10), found in Gibberella zeae (strain ATCC MYA-4620 / CBS 123657 / FGSC 9075 / NRRL 31084 / PH-1) (Wheat head blight fungus).